A 203-amino-acid polypeptide reads, in one-letter code: Outer-membrane lipoprotein carrier protein (203 aa).

Residues 1–21 (MKKWLAISCLIAGVTSTAVYA) form the signal peptide.

The protein belongs to the LolA family. In terms of assembly, monomer.

Its subcellular location is the periplasm. In terms of biological role, participates in the translocation of lipoproteins from the inner membrane to the outer membrane. Only forms a complex with a lipoprotein if the residue after the N-terminal Cys is not an aspartate (The Asp acts as a targeting signal to indicate that the lipoprotein should stay in the inner membrane). The chain is Outer-membrane lipoprotein carrier protein from Pectobacterium atrosepticum (strain SCRI 1043 / ATCC BAA-672) (Erwinia carotovora subsp. atroseptica).